Reading from the N-terminus, the 446-residue chain is UDP-N-acetylmuramoylalanine--D-glutamate ligase (446 aa).

An ATP-binding site is contributed by 118-124 (GSNGKST).

The protein belongs to the MurCDEF family.

The protein resides in the cytoplasm. It carries out the reaction UDP-N-acetyl-alpha-D-muramoyl-L-alanine + D-glutamate + ATP = UDP-N-acetyl-alpha-D-muramoyl-L-alanyl-D-glutamate + ADP + phosphate + H(+). It participates in cell wall biogenesis; peptidoglycan biosynthesis. Functionally, cell wall formation. Catalyzes the addition of glutamate to the nucleotide precursor UDP-N-acetylmuramoyl-L-alanine (UMA). The sequence is that of UDP-N-acetylmuramoylalanine--D-glutamate ligase from Pseudoalteromonas translucida (strain TAC 125).